The following is a 240-amino-acid chain: Eukaryotic translation initiation factor 4E-3 (240 aa).

A disordered region spans residues Met-1 to Asn-51. Over residues Ile-17 to Ser-26 the composition is skewed to polar residues. Basic and acidic residues predominate over residues Ser-39–Asn-51. EIF4G-binding regions lie at residues His-65–Gln-68 and Phe-75–His-111. MRNA-binding positions include Asn-83 to Gly-88, Lys-115, and Trp-133 to Glu-134. Cys-138 and Cys-176 form a disulfide bridge. Residues Asn-159–Gln-168 are EIF4G-binding. Residues Arg-183 to Arg-188 and Lys-228 to Arg-232 each bind mRNA.

It belongs to the eukaryotic initiation factor 4E family. EIF4F is a multi-subunit complex, the composition of which varies with external and internal environmental conditions. It is composed of at least EIF4A, EIF4E and EIF4G. EIF4E is also known to interact with other partners. In higher plants two isoforms of EIF4F have been identified, named isoform EIF4F and isoform EIF(iso)4F. Isoform EIF4F has subunits p220 and p26, whereas isoform EIF(iso)4F has subunits p82 and p28. In terms of processing, according to the redox status, the Cys-138-Cys-176 disulfide bridge may have a role in regulating protein function by affecting its ability to bind capped mRNA.

The protein resides in the nucleus. The protein localises to the cytoplasm. Component of the protein complex eIF4F, which is involved in the recognition of the mRNA cap, ATP-dependent unwinding of 5'-terminal secondary structure and recruitment of mRNA to the ribosome. Recognizes and binds the 7-methylguanosine-containing mRNA cap during an early step in the initiation of protein synthesis and facilitates ribosome binding by inducing the unwinding of the mRNAs secondary structures. This Arabidopsis thaliana (Mouse-ear cress) protein is Eukaryotic translation initiation factor 4E-3.